Consider the following 203-residue polypeptide: MGNKWSKSWPQVRERMRRAPAPAADGVGAVSQDLAKHGAITSSNTAATNADCAWLEAQTEEEVGFPVKPQIPLRPMTYKGAVDLSFFLKEKGGLDGLIYSKKRQEILDLWVHNTQGYFPDWQNYTPGPGIRYPLTFGWCYKLVPVDPSEVEEANEGENNCLLHPICQHGIEDEEREVLQWKFDSSLARRHIARELHPEFYKDC.

A disordered region spans residues 1 to 25 (MGNKWSKSWPQVRERMRRAPAPAAD). Residue glycine 2 is the site of N-myristoyl glycine; by host attachment. Phosphoserine; by host is present on serine 6. Positions 59-62 (TEEE) are acidic; interacts with host PACS1 and PACS2; stabilizes the interaction of NEF/MHC-I with host AP1M1; necessary for MHC-I internalization. Residues 66-75 (PVKPQIPLRP) form an SH3-binding; interaction with Src family tyrosine kinases region. Residues 69 to 72 (PQIP) carry the PxxP; stabilizes the interaction of NEF/MHC-I with host AP1M1; necessary for MHC-I internalization motif. The mediates dimerization, Nef-PTE1 interaction stretch occupies residues 105-121 (EILDLWVHNTQGYFPDW). A binding to ATP6V1H region spans residues 145 to 177 (VDPSEVEEANEGENNCLLHPICQHGIEDEEREV). A Dileucine internalization motif; necessary for CD4 internalization motif is present at residues 161–162 (LL). Residues 171–172 (ED) carry the Diacidic; necessary for CD4 internalization motif.

This sequence belongs to the lentivirus primate group Nef protein family. Monomer; cytosolic form. Homodimer; membrane bound form. Interacts with Nef associated p21-activated kinase (PAK2); this interaction activates PAK2. Associates with the Nef-MHC-I-AP1 complex; this complex is required for MHC-I internalization. Interacts (via C-terminus) with host PI3-kinase. Interacts with host PACS1; this interaction seems to be weak. Interacts with host PACS2. Interacts with host LCK and MAPK3; these interactions inhibit the kinase activity of the latter. Interacts with host ATP6V1H; this interaction may play a role in CD4 endocytosis. Associates with the CD4-Nef-AP2 complex; this complex is required for CD4 internalization. Interacts with host AP2 subunit alpha and AP2 subunit sigma2. Interacts with TCR-zeta chain; this interaction up-regulates the Fas ligand (FasL) surface expression. Interacts with host HCK, LYN, and SRC; these interactions activate the Src family kinases. Interacts with MAP3K5; this interaction inhibits the Fas and TNFR-mediated death signals. Interacts with beta-COP and PTE1. Interacts with human RACK1; this increases Nef phosphorylation by PKC. Interacts with TP53; this interaction decreases the half-life of TP53, protecting the infected cell against p53-mediated apoptosis. Post-translationally, the virion-associated Nef proteins are cleaved by the viral protease to release the soluble C-terminal core protein. Nef is probably cleaved concomitantly with viral structural proteins on maturation of virus particles. Myristoylated. In terms of processing, phosphorylated on serine residues, probably by host PKCdelta and theta.

It localises to the host cell membrane. The protein localises to the virion. The protein resides in the secreted. Its subcellular location is the host Golgi apparatus membrane. Factor of infectivity and pathogenicity, required for optimal virus replication. Alters numerous pathways of T-lymphocyte function and down-regulates immunity surface molecules in order to evade host defense and increase viral infectivity. Alters the functionality of other immunity cells, like dendritic cells, monocytes/macrophages and NK cells. In terms of biological role, in infected CD4(+) T-lymphocytes, down-regulates the surface MHC-I, mature MHC-II, CD4, CD28, CCR5 and CXCR4 molecules. Mediates internalization and degradation of host CD4 through the interaction of with the cytoplasmic tail of CD4, the recruitment of AP-2 (clathrin adapter protein complex 2), internalization through clathrin coated pits, and subsequent transport to endosomes and lysosomes for degradation. Diverts host MHC-I molecules to the trans-Golgi network-associated endosomal compartments by an endocytic pathway to finally target them for degradation. MHC-I down-regulation may involve AP-1 (clathrin adapter protein complex 1) or possibly Src family kinase-ZAP70/Syk-PI3K cascade recruited by PACS2. In consequence infected cells are masked for immune recognition by cytotoxic T-lymphocytes. Decreasing the number of immune receptors also prevents reinfection by more HIV particles (superinfection). Down-regulates host SERINC3 and SERINC5 thereby excluding these proteins from the viral particles. Virion infectivity is drastically higher when SERINC3 or SERINC5 are excluded from the viral envelope, because these host antiviral proteins impair the membrane fusion event necessary for subsequent virion penetration. Its function is as follows. Bypasses host T-cell signaling by inducing a transcriptional program nearly identical to that of anti-CD3 cell activation. Interaction with TCR-zeta chain up-regulates the Fas ligand (FasL). Increasing surface FasL molecules and decreasing surface MHC-I molecules on infected CD4(+) cells send attacking cytotoxic CD8+ T-lymphocytes into apoptosis. Functionally, plays a role in optimizing the host cell environment for viral replication without causing cell death by apoptosis. Protects the infected cells from apoptosis in order to keep them alive until the next virus generation is ready to strike. Inhibits the Fas and TNFR-mediated death signals by blocking MAP3K5/ASK1. Decreases the half-life of TP53, protecting the infected cell against p53-mediated apoptosis. Inhibits the apoptotic signals regulated by the Bcl-2 family proteins through the formation of a Nef/PI3-kinase/PAK2 complex that leads to activation of PAK2 and induces phosphorylation of host BAD. Extracellular Nef protein targets CD4(+) T-lymphocytes for apoptosis by interacting with CXCR4 surface receptors. This Human immunodeficiency virus type 1 group M subtype J (isolate SE9280) (HIV-1) protein is Protein Nef.